The following is a 59-amino-acid chain: Large ribosomal subunit protein uL30 (59 aa).

It belongs to the universal ribosomal protein uL30 family. In terms of assembly, part of the 50S ribosomal subunit.

This chain is Large ribosomal subunit protein uL30, found in Herminiimonas arsenicoxydans.